Reading from the N-terminus, the 116-residue chain is S-adenosylmethionine decarboxylase proenzyme (116 aa).

Ser-62 acts as the Schiff-base intermediate with substrate; via pyruvic acid in catalysis. Ser-62 is subject to Pyruvic acid (Ser); by autocatalysis. His-67 acts as the Proton acceptor; for processing activity in catalysis. The active-site Proton donor; for catalytic activity is the Cys-82.

This sequence belongs to the prokaryotic AdoMetDC family. Type 1 subfamily. Heterotetramer of two alpha and two beta chains arranged as a dimer of alpha/beta heterodimers. Pyruvate is required as a cofactor. Post-translationally, is synthesized initially as an inactive proenzyme. Formation of the active enzyme involves a self-maturation process in which the active site pyruvoyl group is generated from an internal serine residue via an autocatalytic post-translational modification. Two non-identical subunits are generated from the proenzyme in this reaction, and the pyruvate is formed at the N-terminus of the alpha chain, which is derived from the carboxyl end of the proenzyme. The post-translation cleavage follows an unusual pathway, termed non-hydrolytic serinolysis, in which the side chain hydroxyl group of the serine supplies its oxygen atom to form the C-terminus of the beta chain, while the remainder of the serine residue undergoes an oxidative deamination to produce ammonia and the pyruvoyl group blocking the N-terminus of the alpha chain.

The catalysed reaction is S-adenosyl-L-methionine + H(+) = S-adenosyl 3-(methylsulfanyl)propylamine + CO2. It participates in amine and polyamine biosynthesis; S-adenosylmethioninamine biosynthesis; S-adenosylmethioninamine from S-adenosyl-L-methionine: step 1/1. Functionally, catalyzes the decarboxylation of S-adenosylmethionine to S-adenosylmethioninamine (dcAdoMet), the propylamine donor required for the synthesis of the polyamines spermine and spermidine from the diamine putrescine. This Thermomicrobium roseum (strain ATCC 27502 / DSM 5159 / P-2) protein is S-adenosylmethionine decarboxylase proenzyme.